The following is a 326-amino-acid chain: Adenosine receptor A1 (326 aa).

The Extracellular portion of the chain corresponds to 1-10 (MPPSISAFQA). The helical transmembrane segment at 11 to 33 (AYIGIEVLIALVSVPGNVLVIWA) threads the bilayer. Residues 34 to 46 (VKVNQALRDATFC) are Cytoplasmic-facing. A helical membrane pass occupies residues 47 to 69 (FIVSLAVADVAVGALVIPLAILI). The Extracellular segment spans residues 70–80 (NIGPRTYFHTC). Cysteines 80 and 169 form a disulfide. A helical transmembrane segment spans residues 81–102 (LKVACPVLILTQSSILALLAIA). The Cytoplasmic segment spans residues 103–123 (VDRYLRVKIPLRYKTVVTPRR). A helical transmembrane segment spans residues 124–146 (AVVAITGCWILSFVVGLTPMFGW). Residues 147–176 (NNLSAVERDWLANGSVGEPVIECQFEKVIS) are Extracellular-facing. Asn-148 and Asn-159 each carry an N-linked (GlcNAc...) asparagine glycan. The helical transmembrane segment at 177-201 (MEYMVYFNFFVWVLPPLLLMVLIYM) threads the bilayer. At 202 to 235 (EVFYLIRKQLNKKVSASSGDPQKYYGKELKIAKS) the chain is on the cytoplasmic side. The helical transmembrane segment at 236–259 (LALILFLFALSWLPLHILNCITLF) threads the bilayer. Residues 260-267 (CPSCHMPR) are Extracellular-facing. Residues 268–292 (ILIYIAIFLSHGNSAMNPIVYAFRI) form a helical membrane-spanning segment. The Cytoplasmic segment spans residues 293–326 (QKFRVTFLKIWNDHFRCQPAPPVDEDAPAERPDD). A lipid anchor (S-palmitoyl cysteine) is attached at Cys-309.

The protein belongs to the G-protein coupled receptor 1 family.

It is found in the cell membrane. Functionally, receptor for adenosine. The activity of this receptor is mediated by G proteins which inhibit adenylyl cyclase. The sequence is that of Adenosine receptor A1 (ADORA1) from Bos taurus (Bovine).